A 1181-amino-acid chain; its full sequence is HEAT repeat-containing protein 6 (1181 aa).

Residues 159 to 198 (PELLGNTGLLMKLSDLAQSDPEVRRAAVHCMANLCLSVPG) form an HEAT 1 repeat. 2 disordered regions span residues 292 to 347 (QYDG…PVTG) and 371 to 390 (LDGSGAAEKDGVSSSFSSSS). Over residues 300 to 312 (KPQQSESSASRPT) the composition is skewed to polar residues. The segment covering 313-325 (LNKKKKSKVKPKK) has biased composition (basic residues). Phosphoserine is present on residues S336 and S337. Phosphoserine occurs at positions 399 and 402. HEAT repeat units lie at residues 452 to 490 (ELGSPQSVSLMTLTLKDPSPKTRACALQVLSAILEGSKQ), 515 to 552 (SIRELHRCLLLALVAESSSQTVTQIIKCLANLVSNAPY), and 558 to 595 (SLLTKVWNQIKPYIRHKDVNVRVSSLTLLGAIVSTHAP). Positions 613 to 646 (NSNSATPHLSPPDWWKKAPAGPSLEETSVSSPKG) are disordered. Residue T618 is modified to Phosphothreonine. Residues 637 to 646 (EETSVSSPKG) are compositionally biased toward polar residues. Position 643 is a phosphoserine (S643).

As to expression, amplified in breast cancer cell lines MCF-7 and BT-474.

Its function is as follows. Amplification-dependent oncogene. The protein is HEAT repeat-containing protein 6 (HEATR6) of Homo sapiens (Human).